The primary structure comprises 106 residues: Cytochrome c (106 aa).

Heme c contacts are provided by Cys17, Cys20, and His21. Position 75 is an N6,N6,N6-trimethyllysine (Lys75). Position 83 (Met83) interacts with heme c.

The protein belongs to the cytochrome c family. Post-translationally, binds 1 heme c group covalently per subunit.

Its subcellular location is the mitochondrion intermembrane space. Electron carrier protein. The oxidized form of the cytochrome c heme group can accept an electron from the heme group of the cytochrome c1 subunit of cytochrome reductase. Cytochrome c then transfers this electron to the cytochrome oxidase complex, the final protein carrier in the mitochondrial electron-transport chain. In Gibberella zeae (strain ATCC MYA-4620 / CBS 123657 / FGSC 9075 / NRRL 31084 / PH-1) (Wheat head blight fungus), this protein is Cytochrome c (CYC1).